A 68-amino-acid polypeptide reads, in one-letter code: ATP synthase F(0) complex subunit 8 (68 aa).

A helical membrane pass occupies residues 8–24 (VWPTTITPMLLTLFLIT). Position 54 is an N6-acetyllysine; alternate (lysine 54). Lysine 54 is modified (N6-succinyllysine; alternate). Lysine 57 is subject to N6-acetyllysine.

This sequence belongs to the ATPase protein 8 family. In terms of assembly, component of the ATP synthase complex composed at least of ATP5F1A/subunit alpha, ATP5F1B/subunit beta, ATP5MC1/subunit c (homooctomer), MT-ATP6/subunit a, MT-ATP8/subunit 8, ATP5ME/subunit e, ATP5MF/subunit f, ATP5MG/subunit g, ATP5MK/subunit k, ATP5MJ/subunit j, ATP5F1C/subunit gamma, ATP5F1D/subunit delta, ATP5F1E/subunit epsilon, ATP5PF/subunit F6, ATP5PB/subunit b, ATP5PD/subunit d, ATP5PO/subunit OSCP. ATP synthase complex consists of a soluble F(1) head domain (subunits alpha(3) and beta(3)) - the catalytic core - and a membrane F(0) domain - the membrane proton channel (subunits c, a, 8, e, f, g, k and j). These two domains are linked by a central stalk (subunits gamma, delta, and epsilon) rotating inside the F1 region and a stationary peripheral stalk (subunits F6, b, d, and OSCP). Interacts with PRICKLE3.

The protein resides in the mitochondrion membrane. Functionally, subunit 8, of the mitochondrial membrane ATP synthase complex (F(1)F(0) ATP synthase or Complex V) that produces ATP from ADP in the presence of a proton gradient across the membrane which is generated by electron transport complexes of the respiratory chain. ATP synthase complex consist of a soluble F(1) head domain - the catalytic core - and a membrane F(1) domain - the membrane proton channel. These two domains are linked by a central stalk rotating inside the F(1) region and a stationary peripheral stalk. During catalysis, ATP synthesis in the catalytic domain of F(1) is coupled via a rotary mechanism of the central stalk subunits to proton translocation. In vivo, can only synthesize ATP although its ATP hydrolase activity can be activated artificially in vitro. Part of the complex F(0) domain. In Pan paniscus (Pygmy chimpanzee), this protein is ATP synthase F(0) complex subunit 8.